A 276-amino-acid chain; its full sequence is Golgi apparatus membrane protein TVP23 homolog C (276 aa).

Met1 bears the N-acetylmethionine mark. Residues 1–21 (MLQQDSNDDTEDVSLFDAEEE) are disordered. A run of 2 helical transmembrane segments spans residues 52–72 (LLCELLSSSFITCMVTIILLL) and 126–146 (IFWLGLIACSVLWVIFAFSAL). The disordered stretch occupies residues 254 to 276 (GESPNSRGTGEPGPKFHLASGMH).

It belongs to the TVP23 family.

The protein localises to the membrane. This is Golgi apparatus membrane protein TVP23 homolog C (TVP23C) from Homo sapiens (Human).